The sequence spans 263 residues: UPF0739 protein C1orf74 homolog (263 aa).

The protein belongs to the UPF0739 family.

The polypeptide is UPF0739 protein C1orf74 homolog (Bos taurus (Bovine)).